Consider the following 657-residue polypeptide: Protein PSK SIMULATOR 1 (657 aa).

Polar residues-rich tracts occupy residues 1 to 15, 26 to 39, 62 to 76, and 540 to 556; these read MGGL…NNAP, HLNN…SHSG, ESFS…SHPQ, and RSPN…SHNP. 2 disordered regions span residues 1 to 80 and 534 to 559; these read MGGL…NIED and PVKS…PSMG. Residue G2 is the site of N-myristoyl glycine attachment.

It is found in the nucleus. In terms of biological role, promotes seedling growth probably via the regulation of phytosulfokine (PSK) signaling; PSK are peptide phytohormones acting as growth factors. Together with PSI2 and PSI3, required during vegetative growth and reproduction. May also have a function in carbohydrate metabolism. This is Protein PSK SIMULATOR 1 from Arabidopsis thaliana (Mouse-ear cress).